The sequence spans 635 residues: Phosphatidylserine decarboxylase proenzyme 2 (635 aa).

Residues 20–146 enclose the C2 domain; the sequence is KLQKFRIHRR…VVQEPESTCK (127 aa). 2 EF-hand domains span residues 174 to 209 and 210 to 245; these read TERR…FGNL and VAAN…QQEQ. Ca(2+)-binding residues include aspartate 187, asparagine 189, aspartate 191, glutamine 193, glutamate 198, aspartate 223, asparagine 225, aspartate 227, and glutamate 234. Catalysis depends on charge relay system; for autoendoproteolytic cleavage activity residues aspartate 443, histidine 499, and serine 587. The active-site Schiff-base intermediate with substrate; via pyruvic acid; for decarboxylase activity is the serine 587. Serine 587 is subject to Pyruvic acid (Ser); by autocatalysis.

The protein belongs to the phosphatidylserine decarboxylase family. PSD-B subfamily. Eukaryotic type II sub-subfamily. As to quaternary structure, heterodimer of a large membrane-associated beta subunit and a small pyruvoyl-containing alpha subunit. Pyruvate serves as cofactor. Post-translationally, is synthesized initially as an inactive proenzyme. Formation of the active enzyme involves a self-maturation process in which the active site pyruvoyl group is generated from an internal serine residue via an autocatalytic post-translational modification. Two non-identical subunits are generated from the proenzyme in this reaction, and the pyruvate is formed at the N-terminus of the alpha chain, which is derived from the carboxyl end of the proenzyme. The autoendoproteolytic cleavage occurs by a canonical serine protease mechanism, in which the side chain hydroxyl group of the serine supplies its oxygen atom to form the C-terminus of the beta chain, while the remainder of the serine residue undergoes an oxidative deamination to produce ammonia and the pyruvoyl prosthetic group on the alpha chain. During this reaction, the Ser that is part of the protease active site of the proenzyme becomes the pyruvoyl prosthetic group, which constitutes an essential element of the active site of the mature decarboxylase. As to expression, highly expressed in flowers and at lower levels in leaves.

The protein resides in the vacuole membrane. The enzyme catalyses a 1,2-diacyl-sn-glycero-3-phospho-L-serine + H(+) = a 1,2-diacyl-sn-glycero-3-phosphoethanolamine + CO2. Its pathway is phospholipid metabolism; phosphatidylethanolamine biosynthesis; phosphatidylethanolamine from CDP-diacylglycerol: step 2/2. Functionally, catalyzes the formation of phosphatidylethanolamine (PtdEtn) from phosphatidylserine (PtdSer). Plays a central role in phospholipid metabolism and in the interorganelle trafficking of phosphatidylserine. Contributes only to a minor proportion of PtdEtn production. The polypeptide is Phosphatidylserine decarboxylase proenzyme 2 (PSD2) (Arabidopsis thaliana (Mouse-ear cress)).